The sequence spans 687 residues: Hemin receptor (687 aa).

The first 28 residues, 1-28, serve as a signal peptide directing secretion; sequence MPRSTSDRFRWSPLSLAIACTLSLAVQA. Positions 44 to 51 match the TonB box motif; the sequence is DTMVVTAT. The TBDR plug domain occupies 56–167; the sequence is SSFEAPMMVT…LGGVISYETV (112 aa). The 510-residue stretch at 178 to 687 folds into the TBDR beta-barrel domain; it reads NSGYRVYSAA…NAKFFVSYQW (510 aa). Residues 319-338 are disordered; it reads ARPQGTPEEGRKQTTKGGKL. The segment covering 326 to 338 has biased composition (basic and acidic residues); sequence EEGRKQTTKGGKL. Residues 670–687 carry the TonB C-terminal box motif; sequence QGVPQDGRNAKFFVSYQW.

Belongs to the TonB-dependent receptor family.

It is found in the cell outer membrane. Functionally, this protein is involved in the initial step of iron uptake by binding hemin, an iron chelatin siderophore that allows the bacteria to extract iron from the environment. The chain is Hemin receptor (hemR) from Yersinia enterocolitica.